Consider the following 576-residue polypeptide: Arginine--tRNA ligase (576 aa).

Positions 122-132 (PNVAKEMHVGH) match the 'HIGH' region motif.

The protein belongs to the class-I aminoacyl-tRNA synthetase family. As to quaternary structure, monomer.

The protein resides in the cytoplasm. The catalysed reaction is tRNA(Arg) + L-arginine + ATP = L-arginyl-tRNA(Arg) + AMP + diphosphate. This Mannheimia succiniciproducens (strain KCTC 0769BP / MBEL55E) protein is Arginine--tRNA ligase.